Here is a 584-residue protein sequence, read N- to C-terminus: Pentalenolactone D synthase (584 aa).

Residues 55 to 56, 77 to 78, 85 to 86, 97 to 98, Y103, V147, and M486 contribute to the FAD site; these read IG, DG, TW, and DV.

Belongs to the FAD-binding monooxygenase family. FAD is required as a cofactor.

It catalyses the reaction 1-deoxy-11-oxopentalenate + NADPH + O2 + H(+) = pentalenolactone D + NADP(+) + H2O. Its pathway is antibiotic biosynthesis; pentalenolactone biosynthesis. Functionally, catalyzes the flavin-dependent Baeyer-Villiger oxidation of 1-deoxy-11-oxopentalenic acid to pentalenolactone D in the biosynthesis of pentalenolactone antibiotic. This is Pentalenolactone D synthase (penE) from Streptomyces exfoliatus (Streptomyces hydrogenans).